Here is a 1127-residue protein sequence, read N- to C-terminus: Testis-expressed protein 2 (1127 aa).

2 disordered regions span residues 1–27 and 133–279; these read MTSL…HVQR and AVSP…SFFK. A compositionally biased stretch (low complexity) spans 133 to 187; the sequence is AVSPGSSSSGPLASSPSVSSLSEQKTSSSSPLSSPSKSPILSSSASTSTLSSAKP. Position 196 is a phosphoserine (serine 196). Polar residues predominate over residues 249–275; sequence QFTQPRNTGGDSKTAPSSPLTSPSDTR. Threonine 262 bears the Phosphothreonine mark. Residues serine 265, serine 266, serine 270, and serine 295 each carry the phosphoserine modification. Asparagine 330 carries N-linked (GlcNAc...) asparagine glycosylation. The tract at residues 348–386 is disordered; sequence EEECDSEGDGYGSDSNIPRSDHPKSTGEPTREIELKSSQ. The segment covering 366 to 382 has biased composition (basic and acidic residues); it reads RSDHPKSTGEPTREIEL. The next 2 membrane-spanning stretches (helical) occupy residues 475–495 and 497–517; these read TLGF…PHYV and GLFL…WFFT. Disordered stretches follow at residues 648–685, 715–764, 786–816, and 947–980; these read KAQT…QRDQ, KKSS…QKEL, QESR…PPSE, and DEES…GYVG. A compositionally biased stretch (basic and acidic residues) spans 650-670; the sequence is QTDKETSEEKPPAEGSEDPKK. Residues serine 732, serine 738, serine 744, serine 748, serine 751, serine 798, and serine 815 each carry the phosphoserine modification. Positions 735-750 are enriched in polar residues; that stretch reads NSPSGHLTHSRSSSKG. The segment covering 787–804 has biased composition (polar residues); it reads ESRSPQRSPLQSAESSPT. Residues 816–1101 enclose the SMP-LTD domain; the sequence is EEEEQEAWVN…MPNMDDVYIT (286 aa). Over residues 947–962 the composition is skewed to acidic residues; sequence DEESSSAGSSEEDDAP.

The protein localises to the endoplasmic reticulum membrane. It is found in the nucleus membrane. During endoplasmic reticulum (ER) stress or when cellular ceramide levels increase, may induce contacts between the ER and medial-Golgi complex to facilitate non-vesicular transport of ceramides from the ER to the Golgi complex where they are converted to complex sphingolipids, preventing toxic ceramide accumulation. The protein is Testis-expressed protein 2 (TEX2) of Homo sapiens (Human).